We begin with the raw amino-acid sequence, 156 residues long: Small ribosomal subunit protein bS6 (156 aa).

The segment at 95-156 is disordered; it reads AITETSPLAK…DRDEQSEDSE (62 aa). Positions 117–126 are enriched in basic and acidic residues; that stretch reads RSGRDRDESG.

The protein belongs to the bacterial ribosomal protein bS6 family.

Functionally, binds together with bS18 to 16S ribosomal RNA. The chain is Small ribosomal subunit protein bS6 from Nitrosococcus oceani (strain ATCC 19707 / BCRC 17464 / JCM 30415 / NCIMB 11848 / C-107).